We begin with the raw amino-acid sequence, 542 residues long: Protein MGF 505-11L (542 aa).

This sequence belongs to the asfivirus MGF 505 family.

Functionally, plays a role in virus cell tropism, and may be required for efficient virus replication in macrophages. The sequence is that of Protein MGF 505-11L from Ornithodoros (relapsing fever ticks).